Reading from the N-terminus, the 119-residue chain is Ribosome-binding factor A (119 aa).

The protein belongs to the RbfA family. Monomer. Binds 30S ribosomal subunits, but not 50S ribosomal subunits or 70S ribosomes.

The protein resides in the cytoplasm. Functionally, one of several proteins that assist in the late maturation steps of the functional core of the 30S ribosomal subunit. Associates with free 30S ribosomal subunits (but not with 30S subunits that are part of 70S ribosomes or polysomes). Required for efficient processing of 16S rRNA. May interact with the 5'-terminal helix region of 16S rRNA. The sequence is that of Ribosome-binding factor A from Buchnera aphidicola subsp. Baizongia pistaciae (strain Bp).